Reading from the N-terminus, the 40-residue chain is Large ribosomal subunit protein bL36A (40 aa).

Belongs to the bacterial ribosomal protein bL36 family.

The polypeptide is Large ribosomal subunit protein bL36A (Saccharopolyspora erythraea (strain ATCC 11635 / DSM 40517 / JCM 4748 / NBRC 13426 / NCIMB 8594 / NRRL 2338)).